A 98-amino-acid chain; its full sequence is Cystatin-B (98 aa).

At M1 the chain carries N-acetylmethionine. The Secondary area of contact motif lies at 46–50 (QVVAG).

It belongs to the cystatin family.

It is found in the cytoplasm. Functionally, this is an intracellular thiol proteinase inhibitor. The chain is Cystatin-B (CSTB) from Sus scrofa (Pig).